We begin with the raw amino-acid sequence, 393 residues long: Digeranylgeranylglycerophospholipid reductase (393 aa).

Positions 14, 33, 44, 45, 47, 100, 124, 280, 292, and 293 each coordinate FAD.

It belongs to the geranylgeranyl reductase family. DGGGPL reductase subfamily. FAD serves as cofactor.

The catalysed reaction is a 2,3-bis-O-phytanyl-sn-glycerol 1-phospholipid + 8 A = a 2,3-bis-O-(geranylgeranyl)-sn-glycerol 1-phospholipid + 8 AH2. It catalyses the reaction 2,3-bis-O-(phytanyl)-sn-glycerol 1-phosphate + 8 A = 2,3-bis-O-(geranylgeranyl)-sn-glycerol 1-phosphate + 8 AH2. It carries out the reaction CDP-2,3-bis-O-(geranylgeranyl)-sn-glycerol + 8 AH2 = CDP-2,3-bis-O-(phytanyl)-sn-glycerol + 8 A. The enzyme catalyses archaetidylserine + 8 AH2 = 2,3-bis-O-phytanyl-sn-glycero-3-phospho-L-serine + 8 A. It functions in the pathway membrane lipid metabolism; glycerophospholipid metabolism. In terms of biological role, is involved in the reduction of 2,3-digeranylgeranylglycerophospholipids (unsaturated archaeols) into 2,3-diphytanylglycerophospholipids (saturated archaeols) in the biosynthesis of archaeal membrane lipids. Catalyzes the formation of archaetidic acid (2,3-di-O-phytanyl-sn-glyceryl phosphate) from 2,3-di-O-geranylgeranylglyceryl phosphate (DGGGP) via the hydrogenation of each double bond of the isoprenoid chains. Is also probably able to reduce double bonds of geranyl groups in CDP-2,3-bis-O-(geranylgeranyl)-sn-glycerol and archaetidylserine, thus acting at various stages in the biosynthesis of archaeal membrane lipids. In Methanobrevibacter smithii (strain ATCC 35061 / DSM 861 / OCM 144 / PS), this protein is Digeranylgeranylglycerophospholipid reductase.